Here is a 675-residue protein sequence, read N- to C-terminus: MPESTQQSHLSLDHEKMQQPPKGFTERSKTKPNLADFETYQKLYKQSIENPNEFFTQQAKENLDWFKPFDLARFPVDPKDDYKNGDLPAWFINGQLNACYNAVDRWAIKNPDKPAIIYEGDEPDQGRIITYGELLKQVSKLAQALTKLGVKKGDSVAVYLPMIPEAIVTLLAIVRIGAMHSVVFAGFSSASLRDRILDADSRIVITADESKRGGKTIETKKIVDDALKECPKVRNVIVFKRTGNSHVPFSPGRDLWWHDEMAKYGPYFPPVPVNSEDPLFLLYTSGSTGKPKGVQHNTAGYLLGAVLTTKYTFDVHEDDILFTAGDIGWITGHTYCVYGPLLAGATSVVFEGTPAYPNYSRYWEIVDKYKVNQFYVAPTALRLLKRAGTKYVEKYDLSSLRVLGSVGEPIAAEVWHWYNDNIGRGQAHIVDTYWQTESGSHLLTPLAGITPTKPGSASLPFFGVDPKILDPTTGEELPDNDVEGVLAIKSAWPSITRGIYNDYNRFIDTYLAPYANYYFSGDGAARDRDGFYWILGRVDDVVNVSGHRLSTAEIEAALIEHPIVGESAVVGYADELTGQAVAAYVSLKKDKAVGEDVENIKKEMILTVRKEIGPFAAPKMILLVDDLPKTRSGKIMRRILRKVLAGEEDQLGDISTLSNPGVVQQIIDVVHHAKK.

Residues 1 to 10 (MPESTQQSHL) show a composition bias toward polar residues. The interval 1-32 (MPESTQQSHLSLDHEKMQQPPKGFTERSKTKP) is disordered. CoA contacts are provided by residues 212 to 215 (RGGK) and T331. Residues 407–409 (GEP), 431–436 (DTYWQT), D522, and R537 each bind ATP. A CoA-binding site is contributed by S545. R548 provides a ligand contact to ATP. R609 contacts CoA.

It belongs to the ATP-dependent AMP-binding enzyme family.

The catalysed reaction is acetate + ATP + CoA = acetyl-CoA + AMP + diphosphate. In Candida albicans (Yeast), this protein is Acetyl-coenzyme A synthetase 1 (ACS1).